Consider the following 235-residue polypeptide: Uridylate kinase (235 aa).

10–13 (KLSG) is a binding site for ATP. A UMP-binding site is contributed by Gly52. ATP is bound by residues Gly53 and Arg57. Residues Asp72 and 133 to 140 (TSNPYFST) contribute to the UMP site. ATP contacts are provided by Thr160, Tyr166, and Asp169.

This sequence belongs to the UMP kinase family. As to quaternary structure, homohexamer.

It is found in the cytoplasm. It carries out the reaction UMP + ATP = UDP + ADP. It functions in the pathway pyrimidine metabolism; CTP biosynthesis via de novo pathway; UDP from UMP (UMPK route): step 1/1. Inhibited by UTP. Its function is as follows. Catalyzes the reversible phosphorylation of UMP to UDP. This Solibacter usitatus (strain Ellin6076) protein is Uridylate kinase.